A 500-amino-acid polypeptide reads, in one-letter code: Glucose-6-phosphate isomerase (500 aa).

E332 acts as the Proton donor in catalysis. Active-site residues include H363 and K473.

Belongs to the GPI family.

The protein localises to the cytoplasm. It catalyses the reaction alpha-D-glucose 6-phosphate = beta-D-fructose 6-phosphate. The protein operates within carbohydrate biosynthesis; gluconeogenesis. It participates in carbohydrate degradation; glycolysis; D-glyceraldehyde 3-phosphate and glycerone phosphate from D-glucose: step 2/4. Its function is as follows. Catalyzes the reversible isomerization of glucose-6-phosphate to fructose-6-phosphate. The chain is Glucose-6-phosphate isomerase from Rhizorhabdus wittichii (strain DSM 6014 / CCUG 31198 / JCM 15750 / NBRC 105917 / EY 4224 / RW1) (Sphingomonas wittichii).